The chain runs to 169 residues: Disulfide bond formation protein B 1 (169 aa).

The Cytoplasmic segment spans residues 1-13 (MSALLKPLDNRLF). The chain crosses the membrane as a helical span at residues 14 to 30 (WPAVAIGGLLILAFVLY). Residues 31–48 (LQHVRGFAPCSLCIFIRL) are Periplasmic-facing. Cys-40 and Cys-43 form a disulfide bridge. Residues 49-64 (DVLGLVLAGIVGSLAP) form a helical membrane-spanning segment. Residues 65-71 (RSRIAGG) are Cytoplasmic-facing. The chain crosses the membrane as a helical span at residues 72–89 (IAALGMLAASLGGIYHAW). Over 90–145 (SLVAEEKLAAQGMGSCKMFMGFPEWIPLDTWLPQVFQPEGLCGEVVWTLLGQSMAV) the chain is Periplasmic. Cys-105 and Cys-131 are disulfide-bonded. A helical membrane pass occupies residues 146-164 (WSLALFVFCLLVLAAKLAF). Residues 165 to 169 (GRRTA) are Cytoplasmic-facing.

This sequence belongs to the DsbB family.

It is found in the cell inner membrane. Functionally, required for disulfide bond formation in some periplasmic proteins. Acts by oxidizing the DsbA protein. This is Disulfide bond formation protein B 1 from Pseudomonas aeruginosa (strain UCBPP-PA14).